The sequence spans 168 residues: T-cell surface glycoprotein CD3 delta chain (168 aa).

A signal peptide spans 1–21 (MEHSRFLSCLILAALLSQVNP). Over 22-102 (RILKVLEPED…CVELDTATLA (81 aa)) the chain is Extracellular. A disulfide bridge connects residues Cys-37 and Cys-74. Residues Asn-38 and Asn-56 are each glycosylated (N-linked (GlcNAc...) asparagine). The chain crosses the membrane as a helical span at residues 103 to 123 (GMIITDIIATVLLALGVYCFA). Residues 124 to 168 (GHETGRFSRAADTQALMGNDQLYQPLRERNDAQYSRLGDKWARNK) lie on the Cytoplasmic side of the membrane. The region spanning 135 to 163 (DTQALMGNDQLYQPLRERNDAQYSRLGDK) is the ITAM domain. Residues Tyr-146 and Tyr-157 each carry the phosphotyrosine modification.

In terms of assembly, the TCR-CD3 complex is composed of a CD3D/CD3E and a CD3G/CD3E heterodimers that preferentially associate with TCRalpha and TCRbeta, respectively, to form TCRalpha/CD3E/CD3G and TCRbeta/CD3G/CD3E trimers. In turn, the hexamer interacts with CD3Z homodimer to form the TCR-CD3 complex. Alternatively, TCRalpha and TCRbeta can be replaced by TCRgamma and TCRdelta. Interacts with coreceptors CD4 and CD8. Post-translationally, phosphorylated on Tyr residues after T-cell receptor triggering by LCK in association with CD4/CD8. In terms of tissue distribution, CD3D is mostly present on T-lymphocytes with its TCR-CD3 partners. Present also in fetal NK-cells.

It localises to the cell membrane. Functionally, part of the TCR-CD3 complex present on T-lymphocyte cell surface that plays an essential role in adaptive immune response. When antigen presenting cells (APCs) activate T-cell receptor (TCR), TCR-mediated signals are transmitted across the cell membrane by the CD3 chains CD3D, CD3E, CD3G and CD3Z. All CD3 chains contain immunoreceptor tyrosine-based activation motifs (ITAMs) in their cytoplasmic domain. Upon TCR engagement, these motifs become phosphorylated by Src family protein tyrosine kinases LCK and FYN, resulting in the activation of downstream signaling pathways. In addition of this role of signal transduction in T-cell activation, CD3D plays an essential role in thymocyte differentiation. Indeed, participates in correct intracellular TCR-CD3 complex assembly and surface expression. In absence of a functional TCR-CD3 complex, thymocytes are unable to differentiate properly. Interacts with CD4 and CD8 and thus serves to establish a functional link between the TCR and coreceptors CD4 and CD8, which is needed for activation and positive selection of CD4 or CD8 T-cells. This Bos taurus (Bovine) protein is T-cell surface glycoprotein CD3 delta chain (CD3D).